Here is a 213-residue protein sequence, read N- to C-terminus: Orotate phosphoribosyltransferase (213 aa).

Residue Lys-26 coordinates 5-phospho-alpha-D-ribose 1-diphosphate. 34–35 is a binding site for orotate; it reads FF. 5-phospho-alpha-D-ribose 1-diphosphate-binding positions include 72–73, Arg-99, Lys-100, Lys-103, His-105, and 124–132; these read YK and DDVITAGTA. Orotate is bound by residues Thr-128 and Arg-156.

Belongs to the purine/pyrimidine phosphoribosyltransferase family. PyrE subfamily. As to quaternary structure, homodimer. Mg(2+) serves as cofactor.

It catalyses the reaction orotidine 5'-phosphate + diphosphate = orotate + 5-phospho-alpha-D-ribose 1-diphosphate. It participates in pyrimidine metabolism; UMP biosynthesis via de novo pathway; UMP from orotate: step 1/2. Its function is as follows. Catalyzes the transfer of a ribosyl phosphate group from 5-phosphoribose 1-diphosphate to orotate, leading to the formation of orotidine monophosphate (OMP). The polypeptide is Orotate phosphoribosyltransferase (Saccharophagus degradans (strain 2-40 / ATCC 43961 / DSM 17024)).